The sequence spans 300 residues: METNFKSGFLSIIGRPNVGKSTFMNKVIGQKIAIMSDKAQTTRNKIQGVFTTNDAQMIFIDTPGIHKPKHRLGDFMVQIAEDTLNEVDSILFMINADEGYGRGDQYIIDLLQKVNSPVFLIINKIDLIHPDQLLPLIEKYKSLYDFEEIIPISALEGNNVDHLVDVLKEHLPEGPQYYPEDQVTDHPERFVISELIREKVLHLTKEEVPHSIAVVIENIEKNENEKLLIQATIVTERSSQKGILIGKQGTMLKNIGKQARRDIEALLGSKVYLELWIKVKKDWRNRQNQLHEFGFRSDEY.

Residues 6 to 173 enclose the Era-type G domain; the sequence is KSGFLSIIGR…VDVLKEHLPE (168 aa). A G1 region spans residues 14-21; it reads GRPNVGKS. 14 to 21 provides a ligand contact to GTP; it reads GRPNVGKS. Positions 40 to 44 are G2; the sequence is QTTRN. The interval 61-64 is G3; it reads DTPG. GTP-binding positions include 61 to 65 and 123 to 126; these read DTPGI and NKID. The segment at 123 to 126 is G4; it reads NKID. The G5 stretch occupies residues 152-154; sequence ISA. A KH type-2 domain is found at 204 to 281; sequence TKEEVPHSIA…YLELWIKVKK (78 aa).

Belongs to the TRAFAC class TrmE-Era-EngA-EngB-Septin-like GTPase superfamily. Era GTPase family. Monomer.

It is found in the cytoplasm. The protein localises to the cell membrane. Functionally, an essential GTPase that binds both GDP and GTP, with rapid nucleotide exchange. Plays a role in 16S rRNA processing and 30S ribosomal subunit biogenesis and possibly also in cell cycle regulation and energy metabolism. This Oceanobacillus iheyensis (strain DSM 14371 / CIP 107618 / JCM 11309 / KCTC 3954 / HTE831) protein is GTPase Era.